The sequence spans 230 residues: RNA polymerase sigma factor FliA (230 aa).

Residues 6–78 (LWQRYVPLVR…MLDELRSRDW (73 aa)) form a sigma-70 factor domain-2 region. Residues 33–36 (DLLQ) carry the Interaction with polymerase core subunit RpoC motif. A sigma-70 factor domain-3 region spans residues 86 to 156 (NAREVASAMQ…VEPMLEGHED (71 aa)). A sigma-70 factor domain-4 region spans residues 175–223 (AIEALPEREKMVLTLYYQEELNLKEIGAVLEVGESRVSQLHSQAIKRLR). The H-T-H motif DNA-binding region spans 197 to 216 (LKEIGAVLEVGESRVSQLHS).

Belongs to the sigma-70 factor family. FliA subfamily.

The protein resides in the cytoplasm. Functionally, sigma factors are initiation factors that promote the attachment of RNA polymerase to specific initiation sites and are then released. This sigma factor controls the expression of flagella-related genes. The sequence is that of RNA polymerase sigma factor FliA from Yersinia enterocolitica.